The following is a 288-amino-acid chain: MSGVGAITLDGKATRDEIFVDLKERVAALTEQGRTPGLGTVLVGDDPGSQAYVRGKHSDCAKVGINSIRRDLPADISQAELDATIDELNANPECTGYIVQLPLPKHLDENAALERIDPGKDADGLHPTNLGRLVLNEPAPLPCTPRGIVHLLRRYEVEIAGAHVVVIGRGVTVGRPLGLLLTRRSENATVTLCHTATRHLPQFTREADIIVAAAGVPHMVTAEMVRPGAAVIDVGVSRDDNGKLVGDVAPDVWEVAGHVSPNPGGVGPLTRAFLLTNVVERAEALARG.

NADP(+)-binding positions include 168–170 (GRG), threonine 195, and valine 236.

It belongs to the tetrahydrofolate dehydrogenase/cyclohydrolase family. As to quaternary structure, homodimer.

The enzyme catalyses (6R)-5,10-methylene-5,6,7,8-tetrahydrofolate + NADP(+) = (6R)-5,10-methenyltetrahydrofolate + NADPH. The catalysed reaction is (6R)-5,10-methenyltetrahydrofolate + H2O = (6R)-10-formyltetrahydrofolate + H(+). It functions in the pathway one-carbon metabolism; tetrahydrofolate interconversion. Catalyzes the oxidation of 5,10-methylenetetrahydrofolate to 5,10-methenyltetrahydrofolate and then the hydrolysis of 5,10-methenyltetrahydrofolate to 10-formyltetrahydrofolate. In Mycobacterium sp. (strain JLS), this protein is Bifunctional protein FolD.